We begin with the raw amino-acid sequence, 384 residues long: Somatostatin receptor type 4 (384 aa).

Positions 1-34 are disordered; the sequence is MNTPATLPLGGEDTTWTPGINASWAPDEEEDAVR. Topologically, residues 1 to 41 are extracellular; that stretch reads MNTPATLPLGGEDTTWTPGINASWAPDEEEDAVRSDGTGTA. An N-linked (GlcNAc...) asparagine glycan is attached at Asn-21. The helical transmembrane segment at 42 to 69 threads the bilayer; it reads GMVTIQCIYALVCLVGLVGNALVIFVIL. Over 70–79 the chain is Cytoplasmic; it reads RYAKMKTATN. A helical membrane pass occupies residues 80-105; the sequence is IYLLNLAVADELFMLSVPFVASAAAL. The Extracellular segment spans residues 106–116; the sequence is RHWPFGAVLCR. Cysteines 115 and 194 form a disulfide. A helical transmembrane segment spans residues 117-138; it reads AVLSVDGLNMFTSVFCLTVLSV. Over 139 to 160 the chain is Cytoplasmic; that stretch reads DRYVAVVHPLRAATYRRPSVAK. A helical membrane pass occupies residues 161-181; it reads LINLGVWLASLLVTLPIAVFA. Over 182 to 203 the chain is Extracellular; sequence DTRPARGGEAVACNLHWPHPAW. The chain crosses the membrane as a helical span at residues 204-228; the sequence is SAVFVIYTFLLGFLLPVLAIGLCYL. At 229 to 254 the chain is on the cytoplasmic side; it reads LIVGKMRAVALRAGWQQRRRSEKKIT. A helical transmembrane segment spans residues 255 to 280; that stretch reads RLVLMVVTVFVLCWMPFYVVQLLNLF. Topologically, residues 281-287 are extracellular; the sequence is VTSLDAT. A helical transmembrane segment spans residues 288–311; it reads VNHVSLILSYANSCANPILYGFLS. The Cytoplasmic portion of the chain corresponds to 312–384; sequence DNFRRSFQRV…RVPFTKTTTF (73 aa). A lipid anchor (S-palmitoyl cysteine) is attached at Cys-323.

It belongs to the G-protein coupled receptor 1 family. In terms of tissue distribution, brain, lung, heart and islets. Moderate levels in the hippocampus, cortex and olfactory bulb.

It is found in the cell membrane. Functionally, receptor for somatostatin-14. The activity of this receptor is mediated by G proteins which inhibits adenylyl cyclase. It is functionally coupled not only to inhibition of adenylate cyclase, but also to activation of both arachidonate release and mitogen-activated protein (MAP) kinase cascade. In Rattus norvegicus (Rat), this protein is Somatostatin receptor type 4 (Sstr4).